The sequence spans 596 residues: ATP-binding protein Uup (596 aa).

ABC transporter domains follow at residues 1–222 (MSLI…RIEK) and 290–516 (FKLD…SKIN). ATP-binding positions include 36 to 43 (GKNGAGKS) and 322 to 329 (GDNGCGKS). Positions 519-596 (IKIKNNFKKE…LEKNIINTKI (78 aa)) are C-terminal domain (CTD), binds DNA.

The protein belongs to the ABC transporter superfamily. ABCF family. Uup subfamily.

The protein localises to the cytoplasm. It catalyses the reaction ATP + H2O = ADP + phosphate + H(+). Its function is as follows. Probably plays a role in ribosome assembly or function. May be involved in resolution of branched DNA intermediates that result from template switching in postreplication gaps. Binds DNA and has ATPase activity. This Buchnera aphidicola subsp. Acyrthosiphon pisum (strain APS) (Acyrthosiphon pisum symbiotic bacterium) protein is ATP-binding protein Uup.